The following is a 454-amino-acid chain: Protein disulfide-isomerase TMX3 (454 aa).

The N-terminal stretch at 1-24 (MAAWKSWAALRLCATVVLLDMVVC) is a signal peptide. In terms of domain architecture, Thioredoxin spans 25 to 128 (KGFVEDLDES…KDDIIEFAHR (104 aa)). Topologically, residues 25 to 375 (KGFVEDLDES…TIVSIFKSSP (351 aa)) are lumenal. Active-site nucleophile residues include C53 and C56. C53 and C56 are disulfide-bonded. N-linked (GlcNAc...) asparagine glycosylation is found at N258 and N313. The helical transmembrane segment at 376–396 (LMGCFLFGLPLGVISIMCYGI) threads the bilayer. At 397 to 454 (YTADTDGGYIEERYEVSKSENENQEQIEESKEQQEPSSGGSVVPTVQEPKDVLEKKKD) the chain is on the cytoplasmic side. Residues 412–454 (VSKSENENQEQIEESKEQQEPSSGGSVVPTVQEPKDVLEKKKD) form a disordered region. Over residues 444–454 (EPKDVLEKKKD) the composition is skewed to basic and acidic residues. Positions 451-454 (KKKD) match the Di-lysine motif motif.

Belongs to the protein disulfide isomerase family.

The protein localises to the endoplasmic reticulum membrane. It catalyses the reaction Catalyzes the rearrangement of -S-S- bonds in proteins.. Its function is as follows. Probable disulfide isomerase, which participates in the folding of proteins containing disulfide bonds. May act as a dithiol oxidase. Acts as a regulator of endoplasmic reticulum-mitochondria contact sites via its ability to regulate redox signals. In Pongo abelii (Sumatran orangutan), this protein is Protein disulfide-isomerase TMX3 (TMX3).